Here is a 233-residue protein sequence, read N- to C-terminus: MEAPAPSLTEEDLTEVKKDALENLRVYLCEKIIAERHFDHLRAKKILSREDTEEISCRTSSRKRAGKLLDYLQENPRGLDTLVESIRREKTQSFLIQKITDEVLKLRNIKLEHLKGLKCSSCEPFAAGATNNLSRCNSDESNLSEKQRASTVMYHPEGESSTAPFFSMASSLNLPVLEVGRTENSSFSSATLPRPGDPGAPPLPPDLRLEEGGSCGNSSEMFLPLRSRALSRQ.

An N-acetylmethionine modification is found at methionine 1. Positions 13–101 (LTEVKKDALE…QSFLIQKITD (89 aa)) constitute a CARD domain. Residues lysine 17, lysine 31, and lysine 63 each participate in a glycyl lysine isopeptide (Lys-Gly) (interchain with G-Cter in ubiquitin) cross-link. The residue at position 138 (serine 138) is a Phosphoserine. Residues 185 to 233 (SSFSSATLPRPGDPGAPPLPPDLRLEEGGSCGNSSEMFLPLRSRALSRQ) are disordered. The segment covering 195-205 (PGDPGAPPLPP) has biased composition (pro residues).

In terms of assembly, homomultimer; homooligomerized following recruitment by CARD domain-containing proteins that form a nucleating helical template that recruits BCL10 via CARD-CARD interaction. Self-associates by CARD-CARD interaction and interacts with other CARD-proteins such as CARD9, CARD10, CARD11 and CARD14. Forms a complex with CARD14 and MALT1; resulting in the formation of a CBM (CARD14-BCL10-MALT1) complex. Forms a complex with CARD11 and MALT1; resulting in the formation of a CBM (CARD11-BCL10-MALT1) complex. Forms a complex with CARD9 and MALT1; resulting in the formation of a CBM (CARD9-BCL10-MALT1) complex. Found in a membrane raft complex, at least composed of BCL10, CARD11, DPP4 and IKBKB. Binds caspase-9 with its C-terminal domain. Interacts with TRAF2 and BIRC2/c-IAP2. Interacts with PELI2 and SOCS3; these interactions may be mutually exclusive. Phosphorylated by IKBKB/IKKB. Post-translationally, ubiquitinated via both 'Lys-63'-linked and linear ('Met-1'-linked) polyubiquitin chains in response to T-cell receptor (TCR) activation. Ubiquitination is recognized by IKBKG/NEMO, the regulatory subunit of I-kappa-B kinase (IKK), and is required for TCR-induced NF-kappa-B activation. Linear ubiquitination at Lys-17, Lys-31 and Lys-63 is mediated by RNF31/HOIP; linear ubiquitination is recognized with much higher affinity than 'Lys-63'-linked ubiquitin by IKBKG/NEMO. CARD11 is required for linear ubiquitination by HOIP by promoting the targeting of BCL10 to RNF31/HOIP. In terms of processing, proteolytically cleaved by MALT1; required for T-cell activation. Highly expressed in heart, brain, spleen, lung, liver, skeletal muscle, kidney and testis. Detected in developing brain, olfactory epithelium, tongue, whisker follicles, salivary gland, heart, lung, liver and intestinal epithelia of stage 15 embryos.

Its subcellular location is the cytoplasm. It is found in the membrane raft. In terms of biological role, plays a key role in both adaptive and innate immune signaling by bridging CARD domain-containing proteins to immune activation. Acts by channeling adaptive and innate immune signaling downstream of CARD domain-containing proteins CARD9, CARD11 and CARD14 to activate NF-kappa-B and MAP kinase p38 (MAPK11, MAPK12, MAPK13 and/or MAPK14) pathways which stimulate expression of genes encoding pro-inflammatory cytokines and chemokines. Recruited by activated CARD domain-containing proteins: homooligomerized CARD domain-containing proteins form a nucleating helical template that recruits BCL10 via CARD-CARD interaction, thereby promoting polymerization of BCL10, subsequent recruitment of MALT1 and formation of a CBM complex. This leads to activation of NF-kappa-B and MAP kinase p38 (MAPK11, MAPK12, MAPK13 and/or MAPK14) pathways which stimulate expression of genes encoding pro-inflammatory cytokines and chemokines. Activated by CARD9 downstream of C-type lectin receptors; CARD9-mediated signals are essential for antifungal immunity. Activated by CARD11 downstream of T-cell receptor (TCR) and B-cell receptor (BCR). Promotes apoptosis, pro-caspase-9 maturation and activation of NF-kappa-B via NIK and IKK. In Mus musculus (Mouse), this protein is B-cell lymphoma/leukemia 10 (Bcl10).